The chain runs to 455 residues: Bifunctional protein GlmU (455 aa).

Residues 1–226 (MSLDIVILAA…AMEVQGANDR (226 aa)) form a pyrophosphorylase region. UDP-N-acetyl-alpha-D-glucosamine is bound by residues 8 to 11 (LAAG), Lys-22, Gln-73, 78 to 79 (GT), 99 to 101 (YGD), Gly-136, Glu-151, Asn-166, and Asn-224. Position 101 (Asp-101) interacts with Mg(2+). Asn-224 contacts Mg(2+). Residues 227 to 247 (KQLSELERHYQMREARRLMAA) are linker. An N-acetyltransferase region spans residues 248–455 (GVTLRDPARF…WKRPVKISKD (208 aa)). 2 residues coordinate UDP-N-acetyl-alpha-D-glucosamine: Arg-330 and Lys-348. The active-site Proton acceptor is the His-360. Tyr-363 and Asn-374 together coordinate UDP-N-acetyl-alpha-D-glucosamine. Residues Ala-377, 383–384 (NY), Ser-402, Ala-420, and Arg-437 contribute to the acetyl-CoA site.

In the N-terminal section; belongs to the N-acetylglucosamine-1-phosphate uridyltransferase family. The protein in the C-terminal section; belongs to the transferase hexapeptide repeat family. Homotrimer. The cofactor is Mg(2+).

It is found in the cytoplasm. The catalysed reaction is alpha-D-glucosamine 1-phosphate + acetyl-CoA = N-acetyl-alpha-D-glucosamine 1-phosphate + CoA + H(+). The enzyme catalyses N-acetyl-alpha-D-glucosamine 1-phosphate + UTP + H(+) = UDP-N-acetyl-alpha-D-glucosamine + diphosphate. It functions in the pathway nucleotide-sugar biosynthesis; UDP-N-acetyl-alpha-D-glucosamine biosynthesis; N-acetyl-alpha-D-glucosamine 1-phosphate from alpha-D-glucosamine 6-phosphate (route II): step 2/2. It participates in nucleotide-sugar biosynthesis; UDP-N-acetyl-alpha-D-glucosamine biosynthesis; UDP-N-acetyl-alpha-D-glucosamine from N-acetyl-alpha-D-glucosamine 1-phosphate: step 1/1. Its pathway is bacterial outer membrane biogenesis; LPS lipid A biosynthesis. Functionally, catalyzes the last two sequential reactions in the de novo biosynthetic pathway for UDP-N-acetylglucosamine (UDP-GlcNAc). The C-terminal domain catalyzes the transfer of acetyl group from acetyl coenzyme A to glucosamine-1-phosphate (GlcN-1-P) to produce N-acetylglucosamine-1-phosphate (GlcNAc-1-P), which is converted into UDP-GlcNAc by the transfer of uridine 5-monophosphate (from uridine 5-triphosphate), a reaction catalyzed by the N-terminal domain. In Pseudomonas syringae pv. syringae (strain B728a), this protein is Bifunctional protein GlmU.